An 874-amino-acid polypeptide reads, in one-letter code: Alanine--tRNA ligase (874 aa).

Zn(2+) contacts are provided by H562, H566, C665, and H669.

Belongs to the class-II aminoacyl-tRNA synthetase family. Zn(2+) serves as cofactor.

The protein localises to the cytoplasm. It carries out the reaction tRNA(Ala) + L-alanine + ATP = L-alanyl-tRNA(Ala) + AMP + diphosphate. Functionally, catalyzes the attachment of alanine to tRNA(Ala) in a two-step reaction: alanine is first activated by ATP to form Ala-AMP and then transferred to the acceptor end of tRNA(Ala). Also edits incorrectly charged Ser-tRNA(Ala) and Gly-tRNA(Ala) via its editing domain. In Pseudomonas syringae pv. syringae (strain B728a), this protein is Alanine--tRNA ligase.